A 113-amino-acid polypeptide reads, in one-letter code: uncharacterized protein (113 aa).

Basic and acidic residues predominate over residues 1–19; the sequence is MDKKSAHRNPEDAKAGKYE. Positions 1 to 94 are disordered; it reads MDKKSAHRNP…NKWRGKRKVS (94 aa). Over residues 20-41 the composition is skewed to basic residues; it reads GKHKRKKKRKQNQNQHRSRHRS. Over residues 52–66 the composition is skewed to low complexity; the sequence is FPSSSSSSSGSQTDS. The span at 75-92 shows a compositional bias: basic residues; sequence KIKKKRREKTNKWRGKRK.

This is an uncharacterized protein from Macaca fascicularis (Crab-eating macaque).